The sequence spans 190 residues: Holliday junction branch migration complex subunit RuvA (190 aa).

A domain I region spans residues 1–64 (MIGRITGTLI…EDAHILYGFA (64 aa)). The interval 65–137 (TAAERGAFRE…MRGKLGADIG (73 aa)) is domain II. The segment at 137 to 141 (GATAH) is flexible linker. The segment at 142–190 (AVPDSQTDILNALLALGYSDKESQAALKKLPEGTGVSEGIRLALKALVR) is domain III.

It belongs to the RuvA family. Homotetramer. Forms an RuvA(8)-RuvB(12)-Holliday junction (HJ) complex. HJ DNA is sandwiched between 2 RuvA tetramers; dsDNA enters through RuvA and exits via RuvB. An RuvB hexamer assembles on each DNA strand where it exits the tetramer. Each RuvB hexamer is contacted by two RuvA subunits (via domain III) on 2 adjacent RuvB subunits; this complex drives branch migration. In the full resolvosome a probable DNA-RuvA(4)-RuvB(12)-RuvC(2) complex forms which resolves the HJ.

It is found in the cytoplasm. The RuvA-RuvB-RuvC complex processes Holliday junction (HJ) DNA during genetic recombination and DNA repair, while the RuvA-RuvB complex plays an important role in the rescue of blocked DNA replication forks via replication fork reversal (RFR). RuvA specifically binds to HJ cruciform DNA, conferring on it an open structure. The RuvB hexamer acts as an ATP-dependent pump, pulling dsDNA into and through the RuvAB complex. HJ branch migration allows RuvC to scan DNA until it finds its consensus sequence, where it cleaves and resolves the cruciform DNA. The sequence is that of Holliday junction branch migration complex subunit RuvA from Bordetella petrii (strain ATCC BAA-461 / DSM 12804 / CCUG 43448).